The chain runs to 192 residues: MADRALNLDDFLSRFQLLRPQPSRHALNQRQAAVLVPIVRRPQPGLLLTQRSPLLRKHAGQVAFPGGAVDNTDATLIAAALREAQEEVAIPPEAVEVIGVLPPVDSVTGFQVTPVVGIIPPDLHYHASQDEVSAVFEMPLAEALRLGRYHPLDIHRRGNDHRVWLSWYQHYFVWGMTAGIIRELALQIGARP.

The Nudix hydrolase domain maps to 29 to 160; it reads QRQAAVLVPI…PLDIHRRGND (132 aa). A Nudix box motif is present at residues 67–89; sequence GAVDNTDATLIAAALREAQEEVA. Mg(2+) contacts are provided by Glu83 and Glu87.

Belongs to the Nudix hydrolase family. PCD1 subfamily. It depends on Mn(2+) as a cofactor. The cofactor is Mg(2+).

Probably mediates the hydrolysis of some nucleoside diphosphate derivatives. This is an uncharacterized protein from Klebsiella pneumoniae subsp. pneumoniae (strain ATCC 700721 / MGH 78578).